Here is a 1209-residue protein sequence, read N- to C-terminus: DNA-directed RNA polymerase subunit beta (1209 aa).

Basic and acidic residues predominate over residues 1173–1192 (QQEKKKLAEEAAKKDDKPDE). The tract at residues 1173-1209 (QQEKKKLAEEAAKKDDKPDEPVDESDSSTSSDDKVSK) is disordered.

Belongs to the RNA polymerase beta chain family. As to quaternary structure, the RNAP catalytic core consists of 2 alpha, 1 beta, 1 beta' and 1 omega subunit. When a sigma factor is associated with the core the holoenzyme is formed, which can initiate transcription.

The enzyme catalyses RNA(n) + a ribonucleoside 5'-triphosphate = RNA(n+1) + diphosphate. DNA-dependent RNA polymerase catalyzes the transcription of DNA into RNA using the four ribonucleoside triphosphates as substrates. The chain is DNA-directed RNA polymerase subunit beta from Lactobacillus johnsonii (strain CNCM I-12250 / La1 / NCC 533).